The chain runs to 655 residues: UvrABC system protein C (655 aa).

The region spanning 16-95 is the GIY-YIG domain; that stretch reads TDPGVYRFRD…IKEFAPRYNL (80 aa). A UVR domain is found at 207 to 242; the sequence is KRFIGTLEKQMAEAVAELDYERAARLRDDVIALRKV.

It belongs to the UvrC family. Interacts with UvrB in an incision complex.

It localises to the cytoplasm. Its function is as follows. The UvrABC repair system catalyzes the recognition and processing of DNA lesions. UvrC both incises the 5' and 3' sides of the lesion. The N-terminal half is responsible for the 3' incision and the C-terminal half is responsible for the 5' incision. The polypeptide is UvrABC system protein C (Renibacterium salmoninarum (strain ATCC 33209 / DSM 20767 / JCM 11484 / NBRC 15589 / NCIMB 2235)).